The following is a 272-amino-acid chain: uncharacterized protein (272 aa).

NAD(+) is bound by residues 12–34 (FITG…DGAN), 39–40 (DI), 77–78 (DV), and Asn104. A substrate-binding site is contributed by Ser153. Catalysis depends on Tyr170, which acts as the Proton acceptor. Residues Lys174 and 203–205 (VDT) each bind NAD(+).

Belongs to the short-chain dehydrogenases/reductases (SDR) family.

This is an uncharacterized protein from Mycobacterium tuberculosis (strain CDC 1551 / Oshkosh).